Reading from the N-terminus, the 89-residue chain is Small ribosomal subunit protein uS15 (89 aa).

The segment covering 1–10 (MSITAEKKQE) has biased composition (basic and acidic residues). Residues 1–24 (MSITAEKKQEVIQSNARAEGDTGS) are disordered.

This sequence belongs to the universal ribosomal protein uS15 family. Part of the 30S ribosomal subunit. Forms a bridge to the 50S subunit in the 70S ribosome, contacting the 23S rRNA.

Its function is as follows. One of the primary rRNA binding proteins, it binds directly to 16S rRNA where it helps nucleate assembly of the platform of the 30S subunit by binding and bridging several RNA helices of the 16S rRNA. Forms an intersubunit bridge (bridge B4) with the 23S rRNA of the 50S subunit in the ribosome. In Novosphingobium aromaticivorans (strain ATCC 700278 / DSM 12444 / CCUG 56034 / CIP 105152 / NBRC 16084 / F199), this protein is Small ribosomal subunit protein uS15.